The following is a 357-amino-acid chain: Isopentenyl-diphosphate delta-isomerase (357 aa).

6 to 7 contacts substrate; it reads RK. FMN-binding positions include S62, 63-65, S93, and N122; that span reads AMT. 93–95 is a substrate binding site; that stretch reads SQR. Position 156 (Q156) interacts with substrate. E157 contributes to the Mg(2+) binding site. Residues K186, T216, 267–269, and 288–289 contribute to the FMN site; these read GVR and AL.

The protein belongs to the IPP isomerase type 2 family. Homooctamer. Dimer of tetramers. FMN serves as cofactor. It depends on NADPH as a cofactor. Mg(2+) is required as a cofactor.

It localises to the cytoplasm. The catalysed reaction is isopentenyl diphosphate = dimethylallyl diphosphate. Its function is as follows. Involved in the biosynthesis of isoprenoids. Catalyzes the 1,3-allylic rearrangement of the homoallylic substrate isopentenyl (IPP) to its allylic isomer, dimethylallyl diphosphate (DMAPP). The protein is Isopentenyl-diphosphate delta-isomerase of Methanothrix thermoacetophila (strain DSM 6194 / JCM 14653 / NBRC 101360 / PT) (Methanosaeta thermophila).